The sequence spans 216 residues: Hydrogenase-4 component E (216 aa).

Over 1–3 the chain is Periplasmic; sequence MTG. A helical membrane pass occupies residues 4–24; it reads SMIVNNLAGLMMLTSLFVISV. Over 25–38 the chain is Cytoplasmic; the sequence is KSYRLSCGFYACQS. Transmembrane regions (helical) follow at residues 39–59 and 60–80; these read LVLV…QLLI and WSAS…TYAA. Over 81 to 92 the chain is Cytoplasmic; the sequence is RNIPQNIPEKAL. A helical transmembrane segment spans residues 93 to 113; that stretch reads FGPAMMALLAALIVLLCAFVV. Over 114-122 the chain is Periplasmic; it reads QPVKLPMAT. A helical transmembrane segment spans residues 123–143; the sequence is GLKPALAVALGHFLLGLLCIV. Over 144–150 the chain is Cytoplasmic; that stretch reads SQRNILR. Residues 151–171 form a helical membrane-spanning segment; sequence QIFGYCLMENGSHLVLALLAW. Over 172–175 the chain is Periplasmic; sequence RAPE. Residues 176–196 traverse the membrane as a helical segment; sequence LVEIGIATDAIFAVIVMVLLA. The Cytoplasmic portion of the chain corresponds to 197-216; the sequence is RKIWRTHGTLDVNNLTALKG.

It is found in the cell inner membrane. The polypeptide is Hydrogenase-4 component E (hyfE) (Escherichia coli O157:H7).